The sequence spans 158 residues: Small ribosomal subunit protein uS9 (158 aa).

Residues 1-20 form a disordered region; that stretch reads MTEAVETETVEPTTDEATAA. Low complexity predominate over residues 10–20; it reads VEPTTDEATAA.

Belongs to the universal ribosomal protein uS9 family.

The sequence is that of Small ribosomal subunit protein uS9 from Mycobacterium sp. (strain JLS).